Reading from the N-terminus, the 403-residue chain is Argininosuccinate synthase (403 aa).

An ATP-binding site is contributed by 9 to 17 (AYSGGLDTS). Tyr86 contacts L-citrulline. Gly116 contacts ATP. The L-aspartate site is built by Thr118, Asn122, and Asp123. Residue Asn122 participates in L-citrulline binding. L-citrulline contacts are provided by Arg126, Ser174, Glu259, and Tyr271.

The protein belongs to the argininosuccinate synthase family. Type 1 subfamily. As to quaternary structure, homotetramer.

The protein resides in the cytoplasm. It catalyses the reaction L-citrulline + L-aspartate + ATP = 2-(N(omega)-L-arginino)succinate + AMP + diphosphate + H(+). The protein operates within amino-acid biosynthesis; L-arginine biosynthesis; L-arginine from L-ornithine and carbamoyl phosphate: step 2/3. The protein is Argininosuccinate synthase of Ligilactobacillus salivarius (strain UCC118) (Lactobacillus salivarius).